The sequence spans 829 residues: MKLTLKNFKCYTSATFNFALDSTTLITGPSGQGKSTILLAVQFALFGMTGHRYVISHNKSSCEVVLEYRDFWIKRTKRPNVLLVRWKGQAYQDDEAQVVLHRWFGTTANCSTFFLDLSHVEKMEFLERIANATYNVGELKARVKAHLSTLSRDLAVLDGQIATSNEMAAFVEKPDPIPEPNRDLVEESLRDATQEQVEEVRRQTLRLRSCEVEKSNKHATLQAQRGEIEHELRLLGPANDTVATQIATLEESVARLKAQADQLQADKEARILMEDQSSRLTQYDSVSEAAVSERVERVEQLNRAIADAVTMEQLWELDREQQTAARLLEQERHEWRERLDQAQVELDHIAAELGPDQDGCPEVEQRCHEYWHAKSFNSDHNLPQLKEEMVQIRARLYKPICCTQCHHKMLVNMATWEVKDGDDGPICATTGSGEKGRLQADRKRLQQLETLMGQINHNEAVMASTPIDELTARLQLYRDRETVRERIRQMQTFQPSASLAALEHKIKTNVHFKRKSKSTIALVPLLESVESLRERKCTAVVQLDLMKQQLAAKDKLERQLAHYPSSVVHYSEEAHRSSLDELEVCVGQLADKRLEADRVRTIRRLEAKRAKLQTKLDELNHCPEDLTRHESKLREVNVALEYWARVTEYQSYCARLDKWNQFHASLRDARDRRERMEKQYRTTVTFSRMVCEAEHESLQCVVSVVNSHLEILLQDFFPDCCGDPIQIQLELCHDKQRPQVSATINYKGNRVDYKSLSTGEYARVKLAFDLTFKEILGETIIMLDECTANLDQDLSTKIFQKIISTFPSKTILVVAHQAVAGIFNHVLTL.

Belongs to the IIV-6 050L family.

This is an uncharacterized protein from Invertebrate iridescent virus 3 (IIV-3).